The sequence spans 609 residues: tRNA 5-methylaminomethyl-2-thiouridine biosynthesis bifunctional protein MnmC (609 aa).

The segment at 1-229 (MVELAAATCL…TRNTLPARAM (229 aa)) is tRNA (mnm(5)s(2)U34)-methyltransferase. The interval 237 to 609 (IGAGLAGASV…SPELPVSCAP (373 aa)) is FAD-dependent cmnm(5)s(2)U34 oxidoreductase.

It in the N-terminal section; belongs to the methyltransferase superfamily. tRNA (mnm(5)s(2)U34)-methyltransferase family. In the C-terminal section; belongs to the DAO family. It depends on FAD as a cofactor.

It localises to the cytoplasm. The catalysed reaction is 5-aminomethyl-2-thiouridine(34) in tRNA + S-adenosyl-L-methionine = 5-methylaminomethyl-2-thiouridine(34) in tRNA + S-adenosyl-L-homocysteine + H(+). Functionally, catalyzes the last two steps in the biosynthesis of 5-methylaminomethyl-2-thiouridine (mnm(5)s(2)U) at the wobble position (U34) in tRNA. Catalyzes the FAD-dependent demodification of cmnm(5)s(2)U34 to nm(5)s(2)U34, followed by the transfer of a methyl group from S-adenosyl-L-methionine to nm(5)s(2)U34, to form mnm(5)s(2)U34. The sequence is that of tRNA 5-methylaminomethyl-2-thiouridine biosynthesis bifunctional protein MnmC (mnmC) from Albidiferax ferrireducens (strain ATCC BAA-621 / DSM 15236 / T118) (Rhodoferax ferrireducens).